The primary structure comprises 341 residues: S-adenosylmethionine:tRNA ribosyltransferase-isomerase (341 aa).

Belongs to the QueA family. Monomer.

The protein localises to the cytoplasm. It carries out the reaction 7-aminomethyl-7-carbaguanosine(34) in tRNA + S-adenosyl-L-methionine = epoxyqueuosine(34) in tRNA + adenine + L-methionine + 2 H(+). It participates in tRNA modification; tRNA-queuosine biosynthesis. Transfers and isomerizes the ribose moiety from AdoMet to the 7-aminomethyl group of 7-deazaguanine (preQ1-tRNA) to give epoxyqueuosine (oQ-tRNA). This chain is S-adenosylmethionine:tRNA ribosyltransferase-isomerase, found in Clostridium tetani (strain Massachusetts / E88).